The chain runs to 77 residues: UPF0349 protein lmo2392 (77 aa).

It belongs to the UPF0349 family.

The chain is UPF0349 protein lmo2392 from Listeria monocytogenes serovar 1/2a (strain ATCC BAA-679 / EGD-e).